The sequence spans 199 residues: MQYPEPIAQLIDGYMKLPGIGQKSATRLAFFTIDMAEDDVTAFSKALIAAKRDLHFCSICGNITEGDPCSICADKTRDQTHVLVVEQPKDIMVMEKMKEYHGLYHVLHGVMSPIEGKGPEDLNIASLINRLQQNPNIKEVIIATNATPEGEATAMYLSRLIKPAGIKVTRLAHGLSVGSDIEYADEMTLFKAVEGRTEM.

A C4-type zinc finger spans residues 57–72 (CSICGNITEGDPCSIC). A Toprim domain is found at 80 to 176 (THVLVVEQPK…KVTRLAHGLS (97 aa)).

It belongs to the RecR family.

Functionally, may play a role in DNA repair. It seems to be involved in an RecBC-independent recombinational process of DNA repair. It may act with RecF and RecO. The polypeptide is Recombination protein RecR (Levilactobacillus brevis (strain ATCC 367 / BCRC 12310 / CIP 105137 / JCM 1170 / LMG 11437 / NCIMB 947 / NCTC 947) (Lactobacillus brevis)).